We begin with the raw amino-acid sequence, 170 residues long: Bifunctional protein PyrR (170 aa).

The PRPP-binding motif lies at 90–102; the sequence is LVLVDDVLMSGRT.

This sequence belongs to the purine/pyrimidine phosphoribosyltransferase family. PyrR subfamily.

It catalyses the reaction UMP + diphosphate = 5-phospho-alpha-D-ribose 1-diphosphate + uracil. In terms of biological role, regulates the transcription of the pyrimidine nucleotide (pyr) operon in response to exogenous pyrimidines. Functionally, also displays a weak uracil phosphoribosyltransferase activity which is not physiologically significant. This is Bifunctional protein PyrR from Pseudomonas aeruginosa (strain LESB58).